The following is a 62-amino-acid chain: Large ribosomal subunit protein bL28 (62 aa).

Belongs to the bacterial ribosomal protein bL28 family.

The protein is Large ribosomal subunit protein bL28 of Streptococcus uberis (strain ATCC BAA-854 / 0140J).